The sequence spans 470 residues: MSEDYRTEQDSLGEMQVPADAYWGAQTQRAIENFPISGIAFGRRFVRALGVVKKAAAQANRDLGLVDDERADAIVAAADEVIAGEHDDQFPVDVFQTGSGTSSNMNANEVIANRAAELLGEEIGDRVVHPNDHVNYGQSSNDVIPTAMHVASLDALVNDVKPGLETLAAELDDKADAFDGVVKTGRTHLQDATPVRLGQEFGGYRTQVEKGIDRIEAVAPRLSELALGGTAVGTGLNTHPEFPETAAGYISEETGVTFREADNHFEAQAAHDAMNEAHGALRTVAGSLNKIANDLRLLASGPRNGLGEIEQPENQPGSSIMPGKINPVVAEAVNQVHKQVVGNDAAIAAGAAEGQIDLNLYKPVLAHNFLQSADMLANASAAFGEKFVAKLEANEAACEAQVERSMALATALNPTIGYDKASEVAKAALKEGKTVTEVVVEKGYLSEAEAADVLDPEGMTHRGILSGDDT.

Substrate is bound by residues 99 to 101 (SGT), 129 to 132 (HPND), 139 to 141 (SSN), and Thr-187. His-188 functions as the Proton donor/acceptor in the catalytic mechanism. Residue Ser-318 is part of the active site. Substrate contacts are provided by residues Ser-319 and 324–326 (KIN).

The protein belongs to the class-II fumarase/aspartase family. Fumarase subfamily. As to quaternary structure, homotetramer.

Its subcellular location is the cytoplasm. The enzyme catalyses (S)-malate = fumarate + H2O. The protein operates within carbohydrate metabolism; tricarboxylic acid cycle; (S)-malate from fumarate: step 1/1. Its function is as follows. Involved in the TCA cycle. Catalyzes the stereospecific interconversion of fumarate to L-malate. This is Fumarate hydratase class II from Halobacterium salinarum (strain ATCC 700922 / JCM 11081 / NRC-1) (Halobacterium halobium).